The primary structure comprises 257 residues: 1-(5-phosphoribosyl)-5-[(5-phosphoribosylamino)methylideneamino] imidazole-4-carboxamide isomerase (257 aa).

The active-site Proton acceptor is the Asp8. Asp130 functions as the Proton donor in the catalytic mechanism.

This sequence belongs to the HisA/HisF family.

It localises to the cytoplasm. The catalysed reaction is 1-(5-phospho-beta-D-ribosyl)-5-[(5-phospho-beta-D-ribosylamino)methylideneamino]imidazole-4-carboxamide = 5-[(5-phospho-1-deoxy-D-ribulos-1-ylimino)methylamino]-1-(5-phospho-beta-D-ribosyl)imidazole-4-carboxamide. It functions in the pathway amino-acid biosynthesis; L-histidine biosynthesis; L-histidine from 5-phospho-alpha-D-ribose 1-diphosphate: step 4/9. The polypeptide is 1-(5-phosphoribosyl)-5-[(5-phosphoribosylamino)methylideneamino] imidazole-4-carboxamide isomerase (Chlorobium chlorochromatii (strain CaD3)).